The primary structure comprises 198 residues: Dermorphin-2 (198 aa).

An N-terminal signal peptide occupies residues Met1–Ser20. The propeptide occupies Val21–Met45. The disordered stretch occupies residues Glu24–Lys198. At Ala49 the chain carries D-alanine (Ala). Serine amide is present on Ser54. The span at Glu56 to Glu65 shows a compositional bias: basic and acidic residues. Positions Glu56–Met80 are excised as a propeptide. Ala84 is modified (D-alanine (Ala)). Residue Ser89 is modified to Serine amide. The propeptide occupies Glu91 to Met115. Residues Glu100–His109 show a composition bias toward acidic residues. At Ala119 the chain carries D-alanine (Ala). Residue Ser124 is modified to Serine amide. The span at Glu126–Glu135 shows a compositional bias: basic and acidic residues. The propeptide occupies Glu126 to Met150. A D-alanine (Ala) modification is found at Ala154. Ser159 is subject to Serine amide. Positions Glu161–Met185 are excised as a propeptide. Acidic residues predominate over residues Glu170–His179. D-alanine (Ala) is present on Ala189. Ser194 carries the serine amide modification. Positions Glu196–Lys198 are excised as a propeptide.

Belongs to the frog skin active peptide (FSAP) family. Dermorphin subfamily. As to expression, expressed by the skin glands.

The protein localises to the secreted. Its function is as follows. Dermorphin has a very potent opiate-like activity. It has high affinity and selectivity for mu-type opioid receptors. This is Dermorphin-2 from Phyllomedusa sauvagei (Sauvage's leaf frog).